The following is a 530-amino-acid chain: Type 2 DNA topoisomerase 6 subunit B (530 aa).

Residues Asn42, Asp76, 97–98 (SK), 106–113 (GMYGLGVK), and Lys427 contribute to the ATP site.

This sequence belongs to the TOP6B family. Homodimer. Heterotetramer of two Top6A and two Top6B chains.

The catalysed reaction is ATP-dependent breakage, passage and rejoining of double-stranded DNA.. In terms of biological role, relaxes both positive and negative superturns and exhibits a strong decatenase activity. In Saccharolobus solfataricus (strain ATCC 35092 / DSM 1617 / JCM 11322 / P2) (Sulfolobus solfataricus), this protein is Type 2 DNA topoisomerase 6 subunit B.